Reading from the N-terminus, the 451-residue chain is Bifunctional protein GlmU (451 aa).

Residues 1-230 (MNNPIAAIVL…PADVGGINSR (230 aa)) form a pyrophosphorylase region. UDP-N-acetyl-alpha-D-glucosamine-binding positions include 10 to 13 (LAAG), Lys24, Gln74, 79 to 80 (GT), 102 to 104 (YGD), Gly142, Glu156, Asn171, and Asn228. Residue Asp104 participates in Mg(2+) binding. Asn228 contacts Mg(2+). The interval 231 to 251 (AELAAAEAQWQAFRREEAMAA) is linker. The interval 252–451 (GASLRAPETV…RKKKAAEQKK (200 aa)) is N-acetyltransferase. UDP-N-acetyl-alpha-D-glucosamine is bound by residues Arg317 and Lys335. Residue His347 is the Proton acceptor of the active site. Residues Tyr350 and Asn361 each contribute to the UDP-N-acetyl-alpha-D-glucosamine site. Acetyl-CoA is bound by residues Ala364, 370–371 (NY), Ser389, Ala407, and Arg424.

It in the N-terminal section; belongs to the N-acetylglucosamine-1-phosphate uridyltransferase family. In the C-terminal section; belongs to the transferase hexapeptide repeat family. As to quaternary structure, homotrimer. Mg(2+) serves as cofactor.

The protein resides in the cytoplasm. It catalyses the reaction alpha-D-glucosamine 1-phosphate + acetyl-CoA = N-acetyl-alpha-D-glucosamine 1-phosphate + CoA + H(+). The enzyme catalyses N-acetyl-alpha-D-glucosamine 1-phosphate + UTP + H(+) = UDP-N-acetyl-alpha-D-glucosamine + diphosphate. It participates in nucleotide-sugar biosynthesis; UDP-N-acetyl-alpha-D-glucosamine biosynthesis; N-acetyl-alpha-D-glucosamine 1-phosphate from alpha-D-glucosamine 6-phosphate (route II): step 2/2. It functions in the pathway nucleotide-sugar biosynthesis; UDP-N-acetyl-alpha-D-glucosamine biosynthesis; UDP-N-acetyl-alpha-D-glucosamine from N-acetyl-alpha-D-glucosamine 1-phosphate: step 1/1. The protein operates within bacterial outer membrane biogenesis; LPS lipid A biosynthesis. Its function is as follows. Catalyzes the last two sequential reactions in the de novo biosynthetic pathway for UDP-N-acetylglucosamine (UDP-GlcNAc). The C-terminal domain catalyzes the transfer of acetyl group from acetyl coenzyme A to glucosamine-1-phosphate (GlcN-1-P) to produce N-acetylglucosamine-1-phosphate (GlcNAc-1-P), which is converted into UDP-GlcNAc by the transfer of uridine 5-monophosphate (from uridine 5-triphosphate), a reaction catalyzed by the N-terminal domain. The protein is Bifunctional protein GlmU of Sphingopyxis alaskensis (strain DSM 13593 / LMG 18877 / RB2256) (Sphingomonas alaskensis).